We begin with the raw amino-acid sequence, 438 residues long: Ribosomal protein uS12 methylthiotransferase RimO (438 aa).

In terms of domain architecture, MTTase N-terminal spans 5–115 (PRVGFVSLGC…VMSAVHTHLP (111 aa)). [4Fe-4S] cluster-binding residues include Cys-14, Cys-50, Cys-79, Cys-146, Cys-150, and Cys-153. The 238-residue stretch at 132–369 (LTPKHYAYLK…MAVQAEISAR (238 aa)) folds into the Radical SAM core domain. In terms of domain architecture, TRAM spans 372–438 (ERRVGQTLQV…SEHDLWGERR (67 aa)).

Belongs to the methylthiotransferase family. RimO subfamily. [4Fe-4S] cluster serves as cofactor.

It localises to the cytoplasm. The enzyme catalyses L-aspartate(89)-[ribosomal protein uS12]-hydrogen + (sulfur carrier)-SH + AH2 + 2 S-adenosyl-L-methionine = 3-methylsulfanyl-L-aspartate(89)-[ribosomal protein uS12]-hydrogen + (sulfur carrier)-H + 5'-deoxyadenosine + L-methionine + A + S-adenosyl-L-homocysteine + 2 H(+). In terms of biological role, catalyzes the methylthiolation of an aspartic acid residue of ribosomal protein uS12. The polypeptide is Ribosomal protein uS12 methylthiotransferase RimO (Chromobacterium violaceum (strain ATCC 12472 / DSM 30191 / JCM 1249 / CCUG 213 / NBRC 12614 / NCIMB 9131 / NCTC 9757 / MK)).